A 155-amino-acid chain; its full sequence is MGVTSYTLETTTPVAPTRLFKALVVDSDNLIPKLMPQVKNIEAEGDGSIKKMTFVEGSPIKYLKHKIHVVDDKNLVTKYSMIEGDVLGDKLESISYDLKFEAHGNGGCVCKSIAEYHTKGDYVLKDEDHNEGKKQGMELFKIVEAYLLANPSVYA.

It belongs to the BetVI family.

The chain is Pathogenesis-related protein STH-21 (STH-21) from Solanum tuberosum (Potato).